A 540-amino-acid chain; its full sequence is Chaperonin GroEL (540 aa).

ATP is bound by residues 30–33 (TLGP), Lys-51, 87–91 (DGTTT), Gly-415, and Asp-495.

Belongs to the chaperonin (HSP60) family. Forms a cylinder of 14 subunits composed of two heptameric rings stacked back-to-back. Interacts with the co-chaperonin GroES.

The protein resides in the cytoplasm. The catalysed reaction is ATP + H2O + a folded polypeptide = ADP + phosphate + an unfolded polypeptide.. In terms of biological role, together with its co-chaperonin GroES, plays an essential role in assisting protein folding. The GroEL-GroES system forms a nano-cage that allows encapsulation of the non-native substrate proteins and provides a physical environment optimized to promote and accelerate protein folding. This Serratia marcescens protein is Chaperonin GroEL.